A 374-amino-acid polypeptide reads, in one-letter code: Chaperone protein DnaJ (374 aa).

Residues 5–70 (DYYKLLGVDR…EKRAGYDRYG (66 aa)) form the J domain. Residues 136 to 214 (GIQAPIHYVT…CNGSGRRRDE (79 aa)) form a CR-type zinc finger. Residues C149, C152, C166, C169, C188, C191, C202, and C205 each coordinate Zn(2+). CXXCXGXG motif repeat units lie at residues 149–156 (CDMCQGRG), 166–173 (CHTCQGSG), 188–195 (CTTCYGEG), and 202–209 (CKKCNGSG).

Belongs to the DnaJ family. Homodimer. Zn(2+) serves as cofactor.

The protein resides in the cytoplasm. Functionally, participates actively in the response to hyperosmotic and heat shock by preventing the aggregation of stress-denatured proteins and by disaggregating proteins, also in an autonomous, DnaK-independent fashion. Unfolded proteins bind initially to DnaJ; upon interaction with the DnaJ-bound protein, DnaK hydrolyzes its bound ATP, resulting in the formation of a stable complex. GrpE releases ADP from DnaK; ATP binding to DnaK triggers the release of the substrate protein, thus completing the reaction cycle. Several rounds of ATP-dependent interactions between DnaJ, DnaK and GrpE are required for fully efficient folding. Also involved, together with DnaK and GrpE, in the DNA replication of plasmids through activation of initiation proteins. The protein is Chaperone protein DnaJ of Wolbachia sp. subsp. Brugia malayi (strain TRS).